We begin with the raw amino-acid sequence, 505 residues long: Ikaros family zinc finger protein (505 aa).

4 C2H2-type zinc fingers span residues 18–40 (LTCE…KRSH), 46–68 (FQCN…VKLH), 74–96 (FKCS…IRTH), and 102–128 (YKCN…PGFH). Composition is skewed to polar residues over residues 262 to 273 (FLNTPSPVTRSA) and 309 to 327 (RFQH…SQQP). 2 disordered regions span residues 262-296 (FLNT…DIGS) and 309-440 (RFQH…VSGS). Gly residues predominate over residues 336-345 (ILGGSLGGIC). Polar residues predominate over residues 366-377 (ATSSPSNSCPDS). Residues 393 to 406 (GSGSSTSRPNGSTG) show a composition bias toward low complexity. Positions 409 to 419 (HRPEMHQDNGR) are enriched in basic and acidic residues. Positions 424–439 (SGASDSSSLPTYNVSG) are enriched in polar residues. C2H2-type zinc fingers lie at residues 448–470 (YPCH…MGCH) and 476–500 (FECN…RGEH).

This sequence belongs to the Ikaros C2H2-type zinc-finger protein family. Heterodimer and homodimer with other IKAROS family members. In terms of tissue distribution, expression is strongest in the blood, gills and intestine.

It is found in the nucleus. The protein is Ikaros family zinc finger protein of Myxine glutinosa (Atlantic hagfish).